A 767-amino-acid chain; its full sequence is Syn-copalyl diphosphate synthase (767 aa).

A disordered region spans residues 45-74 (GPMLISKSPPYPASEETREWEAEGQHEHTD). Residues 59 to 74 (EETREWEAEGQHEHTD) are compositionally biased toward basic and acidic residues. Lys-233 is a binding site for substrate. Mg(2+) is bound by residues Asp-365 and Asp-367. Residues 365–368 (DIDD) carry the DXDD motif motif. Substrate is bound at residue Lys-453.

It depends on Mg(2+) as a cofactor.

The enzyme catalyses (2E,6E,10E)-geranylgeranyl diphosphate = 9alpha-copalyl diphosphate. Functionally, catalyzes the conversion of geranylgeranyl diphosphate to the phytoalexin precursor syn-copalyl diphosphate. This is Syn-copalyl diphosphate synthase (CPS4) from Oryza sativa subsp. indica (Rice).